The primary structure comprises 291 residues: Pantothenate synthetase (291 aa).

Position 30–37 (30–37 (MGYLHAGH)) interacts with ATP. Histidine 37 acts as the Proton donor in catalysis. Glutamine 61 provides a ligand contact to (R)-pantoate. Glutamine 61 is a beta-alanine binding site. An ATP-binding site is contributed by 147 to 150 (GEKD). Position 153 (glutamine 153) interacts with (R)-pantoate. Residues valine 176 and 184–187 (LSSR) contribute to the ATP site.

Belongs to the pantothenate synthetase family. As to quaternary structure, homodimer.

It is found in the cytoplasm. The enzyme catalyses (R)-pantoate + beta-alanine + ATP = (R)-pantothenate + AMP + diphosphate + H(+). It functions in the pathway cofactor biosynthesis; (R)-pantothenate biosynthesis; (R)-pantothenate from (R)-pantoate and beta-alanine: step 1/1. Catalyzes the condensation of pantoate with beta-alanine in an ATP-dependent reaction via a pantoyl-adenylate intermediate. The sequence is that of Pantothenate synthetase from Rhizobium rhizogenes (strain K84 / ATCC BAA-868) (Agrobacterium radiobacter).